The sequence spans 696 residues: MESEYVLCNWKDQLWPAKVLSRSETSSNSKRKKAFSLEVQILSLDEKIKLDSTETKILNKSQIEAIAASLGLQSEDSAPPTEETAYGRSLKVALGILNERTNLSQASTSDEEEITMLSQNVPQKQSDSPPHKKYRKDEGDLPGCLEERENSACLLASSESDDSLYDDKSQAPTMVDTIPSEVETKSLQNSSWCETFPSLSEDNDEKENKNKIDISAVMSVHSAVKEESACVKDEKFAPPLSPLSSDMLIMPKALKEESEDTCLETLAVPSECSAFSENIEDPGEGPSNPCLDTSQNQPSMESEMGAAACPGSCSRECEVSFSASNPVWDYSHLMSSERNFQRLDFEELEEEGQASDKSLLPSRINLSLLDDDEEDEELPRFILHYETHPFETGMIVWFKYQKYPFWPAVIKSIRRKERKASVLFVEANMNSEKKGIRVNFRRLKKFDCKEKQMLVDKAREDYSESIDWCISLICDYRVRIGCGSFTGSLLEYYAADISYPVRKETKQDTFRNKFPKLHNEDAREPMAVTSQTKKMSFQKILPDRMKAARDRANKNLVDFIVNAKGTENHLLAIVNGTKGSRWLKSFLNANRFTPCIETYFEDEDQLDEVVKYLQEVCNQIDQIMPTWIKDDKIKFILEVLLPEAIICSISAVDGLDYEAAEAKYLKGPCLGYRERELFDAKIIYEKRRKAPTNEAH.

Composition is skewed to polar residues over residues 119–128 (QNVPQKQSDS) and 290–300 (CLDTSQNQPSM). Disordered regions lie at residues 119 to 143 (QNVP…DLPG) and 278 to 303 (NIED…MESE). S128 carries the phosphoserine modification. Residues 392-453 (TGMIVWFKYQ…KKFDCKEKQM (62 aa)) enclose the PWWP domain.

It belongs to the PWWP3A family.

This is PWWP domain-containing DNA repair factor 3B from Homo sapiens (Human).